The following is a 76-amino-acid chain: uncharacterized protein (76 aa).

This is an uncharacterized protein from Dictyostelium discoideum (Social amoeba).